A 179-amino-acid polypeptide reads, in one-letter code: uncharacterized protein (179 aa).

Transmembrane regions (helical) follow at residues 29-49 (LLGI…GPLI), 76-96 (AKHM…DAYS), and 97-117 (GAII…LLWA).

It belongs to the DP1 family.

The protein resides in the membrane. This is an uncharacterized protein from Encephalitozoon cuniculi (strain GB-M1) (Microsporidian parasite).